Here is a 688-residue protein sequence, read N- to C-terminus: Glycine--tRNA ligase beta subunit (688 aa).

Belongs to the class-II aminoacyl-tRNA synthetase family. In terms of assembly, tetramer of two alpha and two beta subunits.

It is found in the cytoplasm. The catalysed reaction is tRNA(Gly) + glycine + ATP = glycyl-tRNA(Gly) + AMP + diphosphate. The chain is Glycine--tRNA ligase beta subunit from Haemophilus influenzae (strain PittEE).